Consider the following 193-residue polypeptide: dTTP/UTP pyrophosphatase (193 aa).

D71 acts as the Proton acceptor in catalysis.

The protein belongs to the Maf family. YhdE subfamily. It depends on a divalent metal cation as a cofactor.

Its subcellular location is the cytoplasm. The catalysed reaction is dTTP + H2O = dTMP + diphosphate + H(+). It catalyses the reaction UTP + H2O = UMP + diphosphate + H(+). Nucleoside triphosphate pyrophosphatase that hydrolyzes dTTP and UTP. May have a dual role in cell division arrest and in preventing the incorporation of modified nucleotides into cellular nucleic acids. This is dTTP/UTP pyrophosphatase from Dictyoglomus thermophilum (strain ATCC 35947 / DSM 3960 / H-6-12).